Here is a 253-residue protein sequence, read N- to C-terminus: Imidazole glycerol phosphate synthase subunit HisF (253 aa).

Residues aspartate 11 and aspartate 130 contribute to the active site.

Belongs to the HisA/HisF family. In terms of assembly, heterodimer of HisH and HisF.

Its subcellular location is the cytoplasm. It catalyses the reaction 5-[(5-phospho-1-deoxy-D-ribulos-1-ylimino)methylamino]-1-(5-phospho-beta-D-ribosyl)imidazole-4-carboxamide + L-glutamine = D-erythro-1-(imidazol-4-yl)glycerol 3-phosphate + 5-amino-1-(5-phospho-beta-D-ribosyl)imidazole-4-carboxamide + L-glutamate + H(+). The protein operates within amino-acid biosynthesis; L-histidine biosynthesis; L-histidine from 5-phospho-alpha-D-ribose 1-diphosphate: step 5/9. IGPS catalyzes the conversion of PRFAR and glutamine to IGP, AICAR and glutamate. The HisF subunit catalyzes the cyclization activity that produces IGP and AICAR from PRFAR using the ammonia provided by the HisH subunit. This Cereibacter sphaeroides (strain ATCC 17029 / ATH 2.4.9) (Rhodobacter sphaeroides) protein is Imidazole glycerol phosphate synthase subunit HisF.